A 117-amino-acid polypeptide reads, in one-letter code: MQTIEIGNKAELQACKFLHTQALEILAHNFKALPYGEIDIIALDKDTLIFIEVKYRSKTKFAQAEEMLTYSKQQKLVNSASIYLQHNPQYQDYQCRFDLIAINESNINWIKNAFGVI.

This sequence belongs to the UPF0102 family.

The chain is UPF0102 protein FTF0898c from Francisella tularensis subsp. tularensis (strain FSC 198).